Reading from the N-terminus, the 329-residue chain is Tryptophan--tRNA ligase (329 aa).

ATP contacts are provided by residues 9–11 and 17–18; these read QPS and GN. The short motif at 10–18 is the 'HIGH' region element; the sequence is PSGTITLGN. Asp132 is an L-tryptophan binding site. ATP is bound by residues 144–146, Val183, and 192–196; these read GDD and KMSKS. Residues 192–196 carry the 'KMSKS' region motif; the sequence is KMSKS.

The protein belongs to the class-I aminoacyl-tRNA synthetase family. As to quaternary structure, homodimer.

The protein resides in the cytoplasm. It catalyses the reaction tRNA(Trp) + L-tryptophan + ATP = L-tryptophyl-tRNA(Trp) + AMP + diphosphate + H(+). In terms of biological role, catalyzes the attachment of tryptophan to tRNA(Trp). The sequence is that of Tryptophan--tRNA ligase from Bacillus anthracis.